A 142-amino-acid polypeptide reads, in one-letter code: Large ribosomal subunit protein uL13 (142 aa).

This sequence belongs to the universal ribosomal protein uL13 family. Part of the 50S ribosomal subunit.

This protein is one of the early assembly proteins of the 50S ribosomal subunit, although it is not seen to bind rRNA by itself. It is important during the early stages of 50S assembly. The sequence is that of Large ribosomal subunit protein uL13 from Aliivibrio fischeri (strain ATCC 700601 / ES114) (Vibrio fischeri).